Here is a 509-residue protein sequence, read N- to C-terminus: Kynureninase 1 (509 aa).

Pyridoxal 5'-phosphate is bound by residues Leu169, Thr170, 197–200 (FPSD), Asp283, His286, and Tyr308. At Lys309 the chain carries N6-(pyridoxal phosphate)lysine. Residues Trp349 and Asn377 each coordinate pyridoxal 5'-phosphate.

Belongs to the kynureninase family. In terms of assembly, homodimer. It depends on pyridoxal 5'-phosphate as a cofactor.

Its subcellular location is the cytoplasm. The enzyme catalyses L-kynurenine + H2O = anthranilate + L-alanine + H(+). It carries out the reaction 3-hydroxy-L-kynurenine + H2O = 3-hydroxyanthranilate + L-alanine + H(+). It functions in the pathway amino-acid degradation; L-kynurenine degradation; L-alanine and anthranilate from L-kynurenine: step 1/1. It participates in cofactor biosynthesis; NAD(+) biosynthesis; quinolinate from L-kynurenine: step 2/3. Its function is as follows. Catalyzes the cleavage of L-kynurenine (L-Kyn) and L-3-hydroxykynurenine (L-3OHKyn) into anthranilic acid (AA) and 3-hydroxyanthranilic acid (3-OHAA), respectively. The protein is Kynureninase 1 (bna5-1) of Aspergillus fumigatus (strain CBS 144.89 / FGSC A1163 / CEA10) (Neosartorya fumigata).